Here is a 756-residue protein sequence, read N- to C-terminus: 3-O-alpha-D-glucosyl-L-rhamnose phosphorylase (756 aa).

Position 358–359 (358–359) interacts with substrate; that stretch reads WD. Glu486 serves as the catalytic Proton donor. A substrate-binding site is contributed by 590–591; that stretch reads KQ.

The protein belongs to the glycosyl hydrolase 65 family. Monomer.

The protein resides in the cytoplasm. It catalyses the reaction 3-O-alpha-D-glucosyl-L-rhamnose + phosphate = beta-D-glucose 1-phosphate + L-rhamnopyranose. Functionally, phosphorylase showing strict alpha-1,3-regioselectivity and producing 3-O-alpha-D-glucopyranosyl-L-rhamnopyranose. Specific for L-rhamnose as acceptor and beta-D-glucose 1-phosphate as donor. Does not phosphorylate alpha,alpha-trehalose, kojibiose, nigerose, or maltose. The polypeptide is 3-O-alpha-D-glucosyl-L-rhamnose phosphorylase (Lachnoclostridium phytofermentans (strain ATCC 700394 / DSM 18823 / ISDg) (Clostridium phytofermentans)).